The sequence spans 448 residues: Serine--tRNA ligase (448 aa).

255–257 contacts L-serine; it reads TSE. An ATP-binding site is contributed by 286-288; it reads RSE. An L-serine-binding site is contributed by Glu309. 373 to 376 lines the ATP pocket; sequence EISS. Residue Ser408 coordinates L-serine.

Belongs to the class-II aminoacyl-tRNA synthetase family. Type-1 seryl-tRNA synthetase subfamily. As to quaternary structure, homodimer. The tRNA molecule binds across the dimer.

The protein localises to the cytoplasm. The enzyme catalyses tRNA(Ser) + L-serine + ATP = L-seryl-tRNA(Ser) + AMP + diphosphate + H(+). It catalyses the reaction tRNA(Sec) + L-serine + ATP = L-seryl-tRNA(Sec) + AMP + diphosphate + H(+). The protein operates within aminoacyl-tRNA biosynthesis; selenocysteinyl-tRNA(Sec) biosynthesis; L-seryl-tRNA(Sec) from L-serine and tRNA(Sec): step 1/1. Its function is as follows. Catalyzes the attachment of serine to tRNA(Ser). Is also able to aminoacylate tRNA(Sec) with serine, to form the misacylated tRNA L-seryl-tRNA(Sec), which will be further converted into selenocysteinyl-tRNA(Sec). The protein is Serine--tRNA ligase of Bordetella petrii (strain ATCC BAA-461 / DSM 12804 / CCUG 43448).